The chain runs to 559 residues: Oxygen-dependent choline dehydrogenase (559 aa).

An FAD-binding site is contributed by 4-33 (DYIIIGAGSAGNVLATRLTEDSDVTVLLLE). The Proton acceptor role is filled by His-473.

The protein belongs to the GMC oxidoreductase family. It depends on FAD as a cofactor.

The enzyme catalyses choline + A = betaine aldehyde + AH2. It carries out the reaction betaine aldehyde + NAD(+) + H2O = glycine betaine + NADH + 2 H(+). The protein operates within amine and polyamine biosynthesis; betaine biosynthesis via choline pathway; betaine aldehyde from choline (cytochrome c reductase route): step 1/1. Its function is as follows. Involved in the biosynthesis of the osmoprotectant glycine betaine. Catalyzes the oxidation of choline to betaine aldehyde and betaine aldehyde to glycine betaine at the same rate. This chain is Oxygen-dependent choline dehydrogenase, found in Cronobacter sakazakii (strain ATCC BAA-894) (Enterobacter sakazakii).